The sequence spans 276 residues: MAIRVYKPTTAGRRNASVSDFSELTRSTPEKSLVRKLSKTGGRNSYGRMTSRHRGGGHKRQYRLIDFKRWDKDGVPAKVAHIEYDPNRSARIALLHYADGEKRYIIAPEGIKQGDVIETGAQADIKPGNNLPLRNIPTGTVVHAIELRPLGGAKIARSAGAAVQLVAKDGAYAQLRMPSGEIRNVDARCRATVGEVGNSDHANIQLGKAGRARWMGKRPITRGESMNPVDHPHGGRTRGGKPPVSPWGKGEVRTRRPKKASNKMIVRRRPNGKNRK.

Disordered stretches follow at residues 35–58 (RKLSKTGGRNSYGRMTSRHRGGGH) and 218–276 (RPIT…KNRK). Over residues 255–276 (RRPKKASNKMIVRRRPNGKNRK) the composition is skewed to basic residues.

This sequence belongs to the universal ribosomal protein uL2 family. In terms of assembly, part of the 50S ribosomal subunit. Forms a bridge to the 30S subunit in the 70S ribosome.

In terms of biological role, one of the primary rRNA binding proteins. Required for association of the 30S and 50S subunits to form the 70S ribosome, for tRNA binding and peptide bond formation. It has been suggested to have peptidyltransferase activity; this is somewhat controversial. Makes several contacts with the 16S rRNA in the 70S ribosome. In Bifidobacterium adolescentis (strain ATCC 15703 / DSM 20083 / NCTC 11814 / E194a), this protein is Large ribosomal subunit protein uL2.